Here is a 695-residue protein sequence, read N- to C-terminus: Testis-specific Y-encoded-like protein 2 (695 aa).

Residues 1 to 56 (MDRPDEGPPAKTRRLSSSESPQRDPPPPPPPPPLLRLPLPPPQQRPRLQEETEAAQ) are disordered. K11 participates in a covalent cross-link: Glycyl lysine isopeptide (Lys-Gly) (interchain with G-Cter in SUMO2). A phosphoserine mark is found at S18 and S20. Residues 23–44 (RDPPPPPPPPPLLRLPLPPPQQ) are compositionally biased toward pro residues. Glycyl lysine isopeptide (Lys-Gly) (interchain with G-Cter in SUMO2) cross-links involve residues K163 and K165. A disordered region spans residues 175–207 (EDEDEQESMRSSRRRRRRRRRKQRKVKRESRQR). Residues 185 to 202 (SSRRRRRRRRRKQRKVKR) show a composition bias toward basic residues. Position 340 is a phosphothreonine (T340). Disordered regions lie at residues 471–603 (DINE…RDIE) and 632–695 (VEEE…GKTG). Residues 481–491 (SPDHDEVRNET) show a composition bias toward basic and acidic residues. The span at 496-518 (ESADDNETTDNNESADDNNENPE) shows a compositional bias: acidic residues. Over residues 519-535 (DNNKNADDNKENPDNNK) the composition is skewed to basic and acidic residues. Positions 539–557 (GNNFFNGGFWGSHGNNQDS) are enriched in low complexity. Composition is skewed to acidic residues over residues 558 to 601 (SDSD…DDRD) and 632 to 677 (VEEE…DLED). Phosphoserine is present on residues S670 and S673.

This sequence belongs to the nucleosome assembly protein (NAP) family. Interacts with histones. Interacts with CASK. Part of a complex containing CASK, TBR1 and TSPYL2. Post-translationally, phosphorylation at Ser-20 and/or Thr-340 impairs function on cell proliferation. As to expression, ubiquitously expressed, with highest levels in testis, adrenal gland, cerebral cortex, ovary, skeletal muscle and spleen. Present in testis, adrenal gland, cerebral cortex and ovary (at protein level).

Its subcellular location is the nucleus. The protein localises to the cytoplasm. In terms of biological role, part of the CASK/TBR1/TSPYL2 transcriptional complex which modulates gene expression in response to neuronal synaptic activity, probably by facilitating nucleosome assembly. May inhibit cell proliferation by inducing p53-dependent CDKN1A expression. In Macaca fascicularis (Crab-eating macaque), this protein is Testis-specific Y-encoded-like protein 2 (TSPYL2).